We begin with the raw amino-acid sequence, 310 residues long: tRNA pseudouridine synthase B (310 aa).

The active-site Nucleophile is the Asp49.

Belongs to the pseudouridine synthase TruB family. Type 1 subfamily.

It carries out the reaction uridine(55) in tRNA = pseudouridine(55) in tRNA. Its function is as follows. Responsible for synthesis of pseudouridine from uracil-55 in the psi GC loop of transfer RNAs. In Rhizobium etli (strain ATCC 51251 / DSM 11541 / JCM 21823 / NBRC 15573 / CFN 42), this protein is tRNA pseudouridine synthase B.